A 358-amino-acid chain; its full sequence is MFEAVEELIGEHTGLEKKLADPSVHADQANARKLNKRYAELTPIVSTYRAWKQTGEDIETAREFAADDPDFAAEVKELEKQREEITEKLRLLLVPRDPSDDKDVLLEIKAGAGGDESALFAGDLLRMYLRYAERVGWKTEIIDSTESELGGYKDVQVAVKTKGGNGATEPGQGVWARMKYEGGVHRVQRVPSTESQGRIHTSAAGVLVTPEAEEVDVEIHANDLRIDVYRSSGPGGQSVNTTDSAVRITHLPTGVVASCQNEKSQLQNKEQAMRILRSRLLAAAQEAAEQEASDVRRSQVRTVDRSEKIRTYNFPENRISDHRVGFKAYNLDQVLDGELDAVIQACVDADSAAKLANA.

Gln-237 bears the N5-methylglutamine mark.

This sequence belongs to the prokaryotic/mitochondrial release factor family. In terms of processing, methylated by PrmC. Methylation increases the termination efficiency of RF1.

It is found in the cytoplasm. Functionally, peptide chain release factor 1 directs the termination of translation in response to the peptide chain termination codons UAG and UAA. In Streptomyces griseus subsp. griseus (strain JCM 4626 / CBS 651.72 / NBRC 13350 / KCC S-0626 / ISP 5235), this protein is Peptide chain release factor 1.